A 70-amino-acid chain; its full sequence is Flexible pilin (70 aa).

Residues 1–24 form the signal peptide; the sequence is MPNFFRNGCIALVGSVAAMGAAHA.

In terms of assembly, homomer.

It localises to the fimbrium. Fimbriae (also called pili) are polar filaments radiating from the surface of the bacterium to a length of 0.5-1.5 micrometers and numbering 100-300 per cell. They enable bacteria to colonize the epithelium of specific host organs. Flexible pili possess hemagglutinating function. This is Flexible pilin (aerA) from Aeromonas hydrophila.